The primary structure comprises 237 residues: Germination-specific N-acetylmuramoyl-L-alanine amidase (237 aa).

The signal sequence occupies residues 1–27 (MRKKLKWLSFLLGFIILLFLFKYQFSN). Residues 43 to 226 (IYLDPGHGGP…VASSIYKGIL (184 aa)) form the MurNAc-LAA domain.

The protein belongs to the N-acetylmuramoyl-L-alanine amidase 3 family.

It is found in the secreted. The catalysed reaction is Hydrolyzes the link between N-acetylmuramoyl residues and L-amino acid residues in certain cell-wall glycopeptides.. In terms of biological role, cleaves the peptide side chain from the N-acetylmuramic acid residues in peptidoglycan. This is a step in the formation of muramic delta-lactam residues in spore cortex. The chain is Germination-specific N-acetylmuramoyl-L-alanine amidase (cwlD) from Bacillus subtilis (strain 168).